The chain runs to 1342 residues: DNA-directed RNA polymerase subunit beta (1342 aa).

It belongs to the RNA polymerase beta chain family. The RNAP catalytic core consists of 2 alpha, 1 beta, 1 beta' and 1 omega subunit. When a sigma factor is associated with the core the holoenzyme is formed, which can initiate transcription.

It carries out the reaction RNA(n) + a ribonucleoside 5'-triphosphate = RNA(n+1) + diphosphate. Its function is as follows. DNA-dependent RNA polymerase catalyzes the transcription of DNA into RNA using the four ribonucleoside triphosphates as substrates. The chain is DNA-directed RNA polymerase subunit beta from Vibrio vulnificus (strain CMCP6).